The primary structure comprises 289 residues: Pantothenate synthetase (289 aa).

30–37 provides a ligand contact to ATP; the sequence is MGYLHKGH. H37 acts as the Proton donor in catalysis. Q61 is a (R)-pantoate binding site. A beta-alanine-binding site is contributed by Q61. An ATP-binding site is contributed by 147–150; that stretch reads GEKD. Q153 provides a ligand contact to (R)-pantoate. ATP-binding positions include V176 and 184-187; that span reads CSSR.

This sequence belongs to the pantothenate synthetase family. As to quaternary structure, homodimer.

The protein resides in the cytoplasm. It carries out the reaction (R)-pantoate + beta-alanine + ATP = (R)-pantothenate + AMP + diphosphate + H(+). It participates in cofactor biosynthesis; (R)-pantothenate biosynthesis; (R)-pantothenate from (R)-pantoate and beta-alanine: step 1/1. Its function is as follows. Catalyzes the condensation of pantoate with beta-alanine in an ATP-dependent reaction via a pantoyl-adenylate intermediate. The polypeptide is Pantothenate synthetase (Allorhizobium ampelinum (strain ATCC BAA-846 / DSM 112012 / S4) (Agrobacterium vitis (strain S4))).